We begin with the raw amino-acid sequence, 463 residues long: ATP-dependent protease ATPase subunit HslU (463 aa).

Residues isoleucine 19, 61–66 (GVGKTE), aspartate 277, glutamate 341, and arginine 413 each bind ATP.

The protein belongs to the ClpX chaperone family. HslU subfamily. As to quaternary structure, a double ring-shaped homohexamer of HslV is capped on each side by a ring-shaped HslU homohexamer. The assembly of the HslU/HslV complex is dependent on binding of ATP.

The protein resides in the cytoplasm. Functionally, ATPase subunit of a proteasome-like degradation complex; this subunit has chaperone activity. The binding of ATP and its subsequent hydrolysis by HslU are essential for unfolding of protein substrates subsequently hydrolyzed by HslV. HslU recognizes the N-terminal part of its protein substrates and unfolds these before they are guided to HslV for hydrolysis. The polypeptide is ATP-dependent protease ATPase subunit HslU (Bacillus cereus (strain B4264)).